Reading from the N-terminus, the 441-residue chain is Membrane-bound protease PH1510 (441 aa).

The N-terminal stretch at 1-20 is a signal peptide; sequence MRRILLSMIVLIFLASPILA. Residue 64-67 participates in substrate binding; that stretch reads GGRA. Ser-97 serves as the catalytic Nucleophile. 119-124 serves as a coordination point for substrate; the sequence is ACRPIL. Residue Lys-138 is the Proton donor/acceptor of the active site. 4 consecutive transmembrane segments (helical) span residues 239–259, 271–291, 307–327, and 344–364; these read VAYLLLTLGIWALIIGFLTPG, IILAIIGFGYFGYNSAGILLI, FGLFTVAGLITFIIGGILLFG, and ILIITVGAILAAFFAFGMAAV.

The protein belongs to the peptidase S14 family. In terms of assembly, homodimer.

The protein resides in the membrane. Inhibited by divalent metal cations, including Mg(2+), Mn(2+), Ca(2+) and Zn(2+). Mildly inhibited by 0.01 % SDS and 0.1% dodecyl-beta-D-maltoside. Activity is nearly abolished by 1 % SDS. In terms of biological role, protease that cleaves its substrates preferentially near hydrophobic or aromatic amino acid residues. Can degrade casein and the stomatin homolog PH1511 (in vitro). In Pyrococcus horikoshii (strain ATCC 700860 / DSM 12428 / JCM 9974 / NBRC 100139 / OT-3), this protein is Membrane-bound protease PH1510.